The following is a 354-amino-acid chain: tRNA-specific 2-thiouridylase MnmA (354 aa).

ATP is bound by residues Leu6 to Ser13 and Leu33. The Nucleophile role is filled by Cys100. A disulfide bond links Cys100 and Cys195. Gly123 is an ATP binding site. Residues Lys145–Gln147 form an interaction with tRNA region. Catalysis depends on Cys195, which acts as the Cysteine persulfide intermediate.

This sequence belongs to the MnmA/TRMU family.

The protein localises to the cytoplasm. The enzyme catalyses S-sulfanyl-L-cysteinyl-[protein] + uridine(34) in tRNA + AH2 + ATP = 2-thiouridine(34) in tRNA + L-cysteinyl-[protein] + A + AMP + diphosphate + H(+). Its function is as follows. Catalyzes the 2-thiolation of uridine at the wobble position (U34) of tRNA, leading to the formation of s(2)U34. In Borrelia recurrentis (strain A1), this protein is tRNA-specific 2-thiouridylase MnmA.